Here is a 322-residue protein sequence, read N- to C-terminus: uncharacterized protein (322 aa).

The protein belongs to the glycosyltransferase 2 family.

This is an uncharacterized protein from Nostoc sp. (strain PCC 7120 / SAG 25.82 / UTEX 2576).